Here is a 639-residue protein sequence, read N- to C-terminus: Altered inheritance of mitochondria protein 9, mitochondrial (639 aa).

Residues 1–45 (MLMSKAPKLGNLLSKNSIKIVSGSKLRCNLKYINVRYISDTPDKV) constitute a mitochondrion transit peptide. A disordered region spans residues 619–639 (VSSEAQSEVQSEVQSSTENKD).

Belongs to the AIM9 family.

The protein resides in the mitochondrion. In Vanderwaltozyma polyspora (strain ATCC 22028 / DSM 70294 / BCRC 21397 / CBS 2163 / NBRC 10782 / NRRL Y-8283 / UCD 57-17) (Kluyveromyces polysporus), this protein is Altered inheritance of mitochondria protein 9, mitochondrial (AIM9).